Here is a 218-residue protein sequence, read N- to C-terminus: Carboxylesterase 2 (218 aa).

Active-site charge relay system residues include Ser-114, Asp-168, and His-199.

It belongs to the AB hydrolase superfamily. AB hydrolase 2 family. In terms of assembly, homodimer.

The catalysed reaction is a carboxylic ester + H2O = an alcohol + a carboxylate + H(+). Hydrolyzes carboxylic ester bonds with relatively broad substrate specificity. This chain is Carboxylesterase 2 (estB), found in Pseudomonas fluorescens.